We begin with the raw amino-acid sequence, 328 residues long: tRNA dimethylallyltransferase (328 aa).

Residue 25–32 (GNTGSGKS) coordinates ATP. 27–32 (TGSGKS) lines the substrate pocket. Residues 50 to 53 (DSRQ) form an interaction with substrate tRNA region.

Belongs to the IPP transferase family. As to quaternary structure, monomer. Mg(2+) is required as a cofactor.

It catalyses the reaction adenosine(37) in tRNA + dimethylallyl diphosphate = N(6)-dimethylallyladenosine(37) in tRNA + diphosphate. Its function is as follows. Catalyzes the transfer of a dimethylallyl group onto the adenine at position 37 in tRNAs that read codons beginning with uridine, leading to the formation of N6-(dimethylallyl)adenosine (i(6)A). This chain is tRNA dimethylallyltransferase, found in Dehalococcoides mccartyi (strain ATCC BAA-2100 / JCM 16839 / KCTC 5957 / BAV1).